The following is a 319-amino-acid chain: tRNA-cytidine(32) 2-sulfurtransferase (319 aa).

A PP-loop motif motif is present at residues 43–48; sequence SGGKDS. [4Fe-4S] cluster-binding residues include cysteine 118, cysteine 121, and cysteine 209. A disordered region spans residues 272 to 297; that stretch reads DLAFDSEKMPERFSDGSEEDESEIKI. Residues 276-286 show a composition bias toward basic and acidic residues; it reads DSEKMPERFSD.

It belongs to the TtcA family. As to quaternary structure, homodimer. The cofactor is Mg(2+). [4Fe-4S] cluster serves as cofactor.

Its subcellular location is the cytoplasm. It catalyses the reaction cytidine(32) in tRNA + S-sulfanyl-L-cysteinyl-[cysteine desulfurase] + AH2 + ATP = 2-thiocytidine(32) in tRNA + L-cysteinyl-[cysteine desulfurase] + A + AMP + diphosphate + H(+). Its pathway is tRNA modification. In terms of biological role, catalyzes the ATP-dependent 2-thiolation of cytidine in position 32 of tRNA, to form 2-thiocytidine (s(2)C32). The sulfur atoms are provided by the cysteine/cysteine desulfurase (IscS) system. In Neisseria gonorrhoeae (strain ATCC 700825 / FA 1090), this protein is tRNA-cytidine(32) 2-sulfurtransferase.